The following is a 287-amino-acid chain: Membrane protein insertase YidC 2 (287 aa).

The N-terminal stretch at 1 to 26 (MKKKKRFKQKLLIASLVIGLMAVLSG) is a signal peptide. Residue C27 is the site of N-palmitoyl cysteine attachment. C27 carries the S-diacylglycerol cysteine lipid modification. Helical transmembrane passes span 65-85 (YAVGIIVVTILIRLLIMPLMI), 135-155 (MMGCLPLLIQMPILLGFYQAI), 178-198 (YILPVVAALTTFLSSKISMMG), 207-224 (AMIVYIMPVMILFMGITL), and 228-250 (LALYWIIGNIFTVFQTLLINNPF).

The protein belongs to the OXA1/ALB3/YidC family. Type 2 subfamily.

The protein resides in the cell membrane. Its function is as follows. Required for the insertion and/or proper folding and/or complex formation of integral membrane proteins into the membrane. Involved in integration of membrane proteins that insert both dependently and independently of the Sec translocase complex, as well as at least some lipoproteins. This is Membrane protein insertase YidC 2 from Listeria monocytogenes serovar 1/2a (strain ATCC BAA-679 / EGD-e).